Reading from the N-terminus, the 318-residue chain is Methionyl-tRNA formyltransferase (318 aa).

Ser-110–Pro-113 serves as a coordination point for (6S)-5,6,7,8-tetrahydrofolate.

It belongs to the Fmt family.

It catalyses the reaction L-methionyl-tRNA(fMet) + (6R)-10-formyltetrahydrofolate = N-formyl-L-methionyl-tRNA(fMet) + (6S)-5,6,7,8-tetrahydrofolate + H(+). Functionally, attaches a formyl group to the free amino group of methionyl-tRNA(fMet). The formyl group appears to play a dual role in the initiator identity of N-formylmethionyl-tRNA by promoting its recognition by IF2 and preventing the misappropriation of this tRNA by the elongation apparatus. The protein is Methionyl-tRNA formyltransferase of Ligilactobacillus salivarius (strain UCC118) (Lactobacillus salivarius).